We begin with the raw amino-acid sequence, 94 residues long: Aspartyl/glutamyl-tRNA(Asn/Gln) amidotransferase subunit C (94 aa).

Belongs to the GatC family. As to quaternary structure, heterotrimer of A, B and C subunits.

It carries out the reaction L-glutamyl-tRNA(Gln) + L-glutamine + ATP + H2O = L-glutaminyl-tRNA(Gln) + L-glutamate + ADP + phosphate + H(+). The enzyme catalyses L-aspartyl-tRNA(Asn) + L-glutamine + ATP + H2O = L-asparaginyl-tRNA(Asn) + L-glutamate + ADP + phosphate + 2 H(+). Functionally, allows the formation of correctly charged Asn-tRNA(Asn) or Gln-tRNA(Gln) through the transamidation of misacylated Asp-tRNA(Asn) or Glu-tRNA(Gln) in organisms which lack either or both of asparaginyl-tRNA or glutaminyl-tRNA synthetases. The reaction takes place in the presence of glutamine and ATP through an activated phospho-Asp-tRNA(Asn) or phospho-Glu-tRNA(Gln). In Campylobacter jejuni subsp. jejuni serotype O:6 (strain 81116 / NCTC 11828), this protein is Aspartyl/glutamyl-tRNA(Asn/Gln) amidotransferase subunit C.